The chain runs to 1583 residues: Methyl-CpG-binding domain protein 5/6 homolog sba (1583 aa).

Residues alanine 81 to glycine 115 form a disordered region. Residues histidine 83–glutamine 104 are compositionally biased toward low complexity. Residues arginine 238–proline 308 form the MBD domain. Disordered regions lie at residues asparagine 427–glutamine 457, glutamate 556–leucine 579, valine 630–valine 694, alanine 839–serine 862, proline 940–glutamine 980, valine 1179–cysteine 1247, and glutamine 1287–leucine 1339. A compositionally biased stretch (low complexity) spans proline 430–proline 439. Residues threonine 440–histidine 449 are compositionally biased toward pro residues. A compositionally biased stretch (low complexity) spans glutamine 563–leucine 579. The segment covering alanine 658–valine 677 has biased composition (polar residues). 2 stretches are compositionally biased toward low complexity: residues serine 679–glutamine 693 and valine 851–serine 862. Polar residues-rich tracts occupy residues valine 1179–cysteine 1195, cysteine 1216–threonine 1240, and glutamine 1287–threonine 1313. Positions arginine 1323–serine 1333 are enriched in low complexity. The PWWP domain occupies isoleucine 1346–glycine 1408. A coiled-coil region spans residues alanine 1415–serine 1446. Residues isoleucine 1471–isoleucine 1497 form a disordered region. Positions glutamine 1474–glutamine 1488 are enriched in low complexity.

In terms of assembly, component of the polycomb repressive deubiquitinase (PR-DUB) complex, at least composed of caly/calypso, Asx and sba (MDB5/6 homolog). Interacts (via MBD domain) with Asx (via PHD domain); the interaction is important for the stability of the PR-DUB complex.

In terms of biological role, non-catalytic component of the polycomb repressive deubiquitinase (PR-DUB) complex, a complex that specifically mediates deubiquitination of histone H2A monoubiquitinated at 'Lys-119' (H2AK118ub1). Important for maintaining stability of the PR-DUB complex. Probable epigenetic regulator involved in developmental pattern formation and eye development. The polypeptide is Methyl-CpG-binding domain protein 5/6 homolog sba (Drosophila melanogaster (Fruit fly)).